A 181-amino-acid polypeptide reads, in one-letter code: 28 kDa heat- and acid-stable phosphoprotein (181 aa).

Residues 1–14 (MPKGGRKGGHKGRA) are compositionally biased toward basic residues. The disordered stretch occupies residues 1–117 (MPKGGRKGGH…SRREREEIEK (117 aa)). T18 is modified (phosphothreonine). Residue S19 is modified to Phosphoserine. Positions 30–59 (EKQKAREEEEQKEGGDGAAGDPKKEKKSLD) are enriched in basic and acidic residues. A Glycyl lysine isopeptide (Lys-Gly) (interchain with G-Cter in SUMO2) cross-link involves residue K52. Phosphoserine occurs at positions 57, 60, and 63. The span at 60 to 69 (SDESEDEEDD) shows a compositional bias: acidic residues. The residue at position 70 (Y70) is a Phosphotyrosine. Positions 102–117 (DGPKELSRREREEIEK) are enriched in basic and acidic residues. The residue at position 126 (K126) is an N6-methyllysine. K132 and K164 each carry N6-acetyllysine. Residues 151–167 (EEAARKKEEERKAKDDA) show a composition bias toward basic and acidic residues. Residues 151 to 181 (EEAARKKEEERKAKDDATLSGKRMQSLSLNK) form a disordered region. Residues S176 and S178 each carry the phosphoserine modification.

Belongs to the PDAP1 family.

In terms of biological role, enhances PDGFA-stimulated cell growth in fibroblasts, but inhibits the mitogenic effect of PDGFB. The polypeptide is 28 kDa heat- and acid-stable phosphoprotein (PDAP1) (Homo sapiens (Human)).